We begin with the raw amino-acid sequence, 373 residues long: Chaperone protein DnaJ (373 aa).

Positions 4–68 (DYYEILGLTK…VKREQYNQFG (65 aa)) constitute a J domain. Residues 142-224 (GKEIVEPLEK…CKGKTHTKTT (83 aa)) form a CR-type zinc finger. Residues C155, C158, C172, C175, C198, C201, C212, and C215 each coordinate Zn(2+). CXXCXGXG motif repeat units follow at residues 155–162 (CNTCNGSG), 172–179 (CTQCSGMG), 198–205 (CSKCNGIG), and 212–219 (CLICKGKT).

Belongs to the DnaJ family. As to quaternary structure, homodimer. Requires Zn(2+) as cofactor.

The protein localises to the cytoplasm. In terms of biological role, participates actively in the response to hyperosmotic and heat shock by preventing the aggregation of stress-denatured proteins and by disaggregating proteins, also in an autonomous, DnaK-independent fashion. Unfolded proteins bind initially to DnaJ; upon interaction with the DnaJ-bound protein, DnaK hydrolyzes its bound ATP, resulting in the formation of a stable complex. GrpE releases ADP from DnaK; ATP binding to DnaK triggers the release of the substrate protein, thus completing the reaction cycle. Several rounds of ATP-dependent interactions between DnaJ, DnaK and GrpE are required for fully efficient folding. Also involved, together with DnaK and GrpE, in the DNA replication of plasmids through activation of initiation proteins. The sequence is that of Chaperone protein DnaJ from Mycoplasma mobile (strain ATCC 43663 / 163K / NCTC 11711) (Mesomycoplasma mobile).